The chain runs to 596 residues: Actin-related protein 9 (596 aa).

Residues Leu-148 to Glu-178 are disordered.

It belongs to the actin family. ARP8 subfamily.

The protein is Actin-related protein 9 (ARP9) of Arabidopsis thaliana (Mouse-ear cress).